Reading from the N-terminus, the 89-residue chain is Large ribosomal subunit protein eL43 (89 aa).

Zn(2+) is bound by residues C38, C41, C56, and C59. The segment at 38–59 (CPVCHKRAVKRVGTGIWRCTKC) adopts a C4-type zinc-finger fold.

The protein belongs to the eukaryotic ribosomal protein eL43 family. Putative zinc-binding subfamily. In terms of assembly, part of the 50S ribosomal subunit. Zn(2+) is required as a cofactor.

In terms of biological role, binds to the 23S rRNA. In Methanopyrus kandleri (strain AV19 / DSM 6324 / JCM 9639 / NBRC 100938), this protein is Large ribosomal subunit protein eL43.